Consider the following 168-residue polypeptide: Photosystem I assembly protein Ycf3 (168 aa).

TPR repeat units lie at residues 35-68 (AFTYYRDGMSAQSEGNYAEALQNYYEAMRLEIDP), 72-105 (SYILYNIGLIHTSNGEHTKALEYYFRALERNPFL), and 120-153 (GEQAIQQGDSEIAEAWFDQAAEYWKQAIALTPGN).

Belongs to the Ycf3 family.

It localises to the plastid. The protein resides in the chloroplast thylakoid membrane. Essential for the assembly of the photosystem I (PSI) complex. May act as a chaperone-like factor to guide the assembly of the PSI subunits. The sequence is that of Photosystem I assembly protein Ycf3 from Solanum lycopersicum (Tomato).